The chain runs to 352 residues: Nuclear receptor subfamily 1 group I member 3 (352 aa).

The segment at residues 8 to 83 (LRNCVVCGDQ…AGMRKDMILS (76 aa)) is a DNA-binding region (nuclear receptor). Residues 11-31 (CVVCGDQATGYHFNALTCEGC) form an NR C4-type zinc finger. Residue threonine 38 is modified to Phosphothreonine; by PKC. An NR C4-type zinc finger spans residues 47-71 (CPFAGSCEVSKTQRRHCPACRLQKC). One can recognise an NR LBD domain in the interval 109 to 352 (EQEELIRTLL…MMPLLQEICS (244 aa)).

The protein belongs to the nuclear hormone receptor family. NR1 subfamily. In terms of assembly, interacts with ECT2. Heterodimer of NR1I3 and RXR. Interacts with PSMC4. Directly interacts with DNAJC7. The DNAJC7-NR1I3 complex may also include HSP90. Interacts with CRY1. Interacts with CRY2 in a ligand-dependent manner. Post-translationally, phosphorylated at Thr-38 by PKC, dephosphorylation of Thr-38 is required for nuclear translocation and activation. In terms of tissue distribution, predominantly expressed in liver.

The protein localises to the nucleus. It localises to the cytoplasm. It is found in the cytoskeleton. Functionally, binds and transactivates the retinoic acid response elements that control expression of the retinoic acid receptor beta 2 and alcohol dehydrogenase 3 genes. Transactivates both the phenobarbital responsive element module of the human CYP2B6 gene and the CYP3A4 xenobiotic response element. This Homo sapiens (Human) protein is Nuclear receptor subfamily 1 group I member 3 (NR1I3).